Here is a 288-residue protein sequence, read N- to C-terminus: Cyclic UMP-AMP synthase (288 aa).

The tract at residues 1 to 23 is disordered; it reads MPVPESQLERWSHQGATTTAKKT. A UTP-binding site is contributed by Q46. 46-48 serves as a coordination point for ATP; the sequence is QGS. Mg(2+) is bound by residues D60 and D62. Residues D62 and 116–120 contribute to the UTP site; that span reads RKTLK. Residue D129 participates in Mg(2+) binding. N166 lines the UTP pocket. Positions 194, 212, and 265 each coordinate ATP.

It belongs to the CD-NTase family. E01 subfamily. It depends on Mg(2+) as a cofactor.

The enzyme catalyses UTP + ATP = 3',3'-cUAMP + 2 diphosphate. Functionally, cyclic nucleotide synthase (second messenger synthase) of a CBASS antivirus system. CBASS (cyclic oligonucleotide-based antiphage signaling system) provides immunity against bacteriophage. The CD-NTase protein synthesizes cyclic nucleotides in response to infection; these serve as specific second messenger signals. The signals activate a diverse range of effectors, leading to bacterial cell death and thus abortive phage infection. A type I-B(UU) CBASS system. Its function is as follows. Cyclic dinucleotide synthase that catalyzes the synthesis of 3'3'-cyclic UMP-AMP (cUMP-AMP) from UTP and ATP, a second messenger for cell signal transduction. In Rhodothermus marinus (strain SG0.5JP17-172), this protein is Cyclic UMP-AMP synthase.